The sequence spans 267 residues: MTEERKETFEEEINQSERIDADEEPLSRMSRKASRQSKQKQKQKQKPRQERGESTVKDKLASVWAAINRYCGFAFSILKSPAKTVVTDGFSHYKYGLISMLIFSIIFSIGNWFQLKASWNRPLGFGERHHAFYDGFLVVLVYLLIFFAVMVFAIWAVSRYMMKQKVTFREAAAVLGSLLVPVIAVSILWLIFAIVNIPMLTVLFTVLILFSIFFIIALYVQRVYQAAQDAPIDYIYCVFAVVAIALLFTAVTWPFISEYITASLIPL.

The segment at 1-55 (MTEERKETFEEEINQSERIDADEEPLSRMSRKASRQSKQKQKQKQKPRQERGEST) is disordered. Residues 9–24 (FEEEINQSERIDADEE) are compositionally biased toward acidic residues. Positions 29-46 (MSRKASRQSKQKQKQKQK) are enriched in basic residues. 5 helical membrane passes run 93 to 115 (YKYGLISMLIFSIIFSIGNWFQL), 135 to 157 (GFLVVLVYLLIFFAVMVFAIWAV), 173 to 195 (AVLGSLLVPVIAVSILWLIFAIV), 199 to 221 (MLTVLFTVLILFSIFFIIALYVQ), and 234 to 256 (YIYCVFAVVAIALLFTAVTWPFI).

Its subcellular location is the cell membrane. This is an uncharacterized protein from Bacillus subtilis (strain 168).